The following is a 203-amino-acid chain: Nascent polypeptide-associated complex subunit alpha-like protein 1 (203 aa).

Residues 1 to 23 (MTTEEKEILAAKLEEQKIDLDKP) show a composition bias toward basic and acidic residues. The disordered stretch occupies residues 1 to 71 (MTTEEKEILA…SEKKSRKAML (71 aa)). Positions 24–50 (EVEDDDDNEDDDSDDDDKDDDEADGLD) are enriched in acidic residues. S36 is subject to Phosphoserine. An NAC-A/B domain is found at 60–125 (SRSEKKSRKA…AKIEDLSSQI (66 aa)). A UBA domain is found at 158-203 (EVDEEGVEPKDIELVMTQAGVSRPNAVKALKAADGDIVSAIMELTT).

It belongs to the NAC-alpha family.

In terms of biological role, may promote appropriate targeting of ribosome-nascent polypeptide complexes. This Arabidopsis thaliana (Mouse-ear cress) protein is Nascent polypeptide-associated complex subunit alpha-like protein 1.